Reading from the N-terminus, the 167-residue chain is UPF0114 protein in repA1-repA2 intergenic region (167 aa).

3 helical membrane passes run 15–35, 53–73, and 136–156; these read LMFP…LKFF, LVLV…LVMV, and IMLC…MAYI.

Belongs to the UPF0114 family.

It is found in the cell membrane. The protein is UPF0114 protein in repA1-repA2 intergenic region of Buchnera aphidicola subsp. Diuraphis noxia.